The chain runs to 539 residues: RING finger protein 37 (539 aa).

Residues 226–249 are disordered; the sequence is PALPMESDCDPGGQSESQHSPCTL. The segment covering 239–249 has biased composition (polar residues); the sequence is QSESQHSPCTL. In terms of domain architecture, U-box spans 258–338; it reads DVPEEFLDPI…DRFLLQHSIS (81 aa). Disordered regions lie at residues 359 to 399 and 456 to 479; these read LPSR…EPTA and GTRGSSACRRPASSSEHPRSVSGP. Over residues 374–395 the composition is skewed to low complexity; that stretch reads HYSLGMSASSSATSPLFSPTTS. The segment at 481 to 526 adopts an RING-type zinc-finger fold; that stretch reads CASCKQAFSSYSTNEPVYQLPCGHLLCRPCLSEKQRSQPMMCTACR.

Interacts with UBE2L3. Interacts with VCP. Expressed in testis and placenta.

The protein resides in the nucleus. The enzyme catalyses S-ubiquitinyl-[E2 ubiquitin-conjugating enzyme]-L-cysteine + [acceptor protein]-L-lysine = [E2 ubiquitin-conjugating enzyme]-L-cysteine + N(6)-ubiquitinyl-[acceptor protein]-L-lysine.. It participates in protein modification; protein ubiquitination. Functionally, may have a ubiquitin-protein ligase activity acting as an E3 ubiquitin-protein ligase or as a ubiquitin-ubiquitin ligase promoting elongation of ubiquitin chains on substrates. This is RING finger protein 37 (Ubox5) from Mus musculus (Mouse).